Here is a 202-residue protein sequence, read N- to C-terminus: Peptide methionine sulfoxide reductase A1 (202 aa).

Residues 1–20 (MNILNKLGIGSSRQTNMDPS) are disordered. Residue Ser-189 is modified to Phosphoserine.

It belongs to the MsrA Met sulfoxide reductase family.

The protein localises to the cytoplasm. It is found in the cytosol. It carries out the reaction L-methionyl-[protein] + [thioredoxin]-disulfide + H2O = L-methionyl-(S)-S-oxide-[protein] + [thioredoxin]-dithiol. The enzyme catalyses [thioredoxin]-disulfide + L-methionine + H2O = L-methionine (S)-S-oxide + [thioredoxin]-dithiol. Catalyzes the reduction of methionine sulfoxide (MetSO) to methionine in proteins. Plays a protective role against oxidative stress by restoring activity to proteins that have been inactivated by methionine oxidation. MSRA family specifically reduces the MetSO S-enantiomer. The polypeptide is Peptide methionine sulfoxide reductase A1 (MSRA1) (Arabidopsis thaliana (Mouse-ear cress)).